The chain runs to 1173 residues: BRCA2-interacting transcriptional repressor EMSY (1173 aa).

In terms of domain architecture, ENT spans 16–100; it reads CKRILRKLEL…EWSIEGRRLV (85 aa). Residues 149–177 are compositionally biased toward low complexity; the sequence is STTSTPPSASAPSSSSAAVKSPRPASPAS. Disordered regions lie at residues 149 to 179, 191 to 216, 676 to 720, 797 to 816, 905 to 998, 1020 to 1046, and 1139 to 1173; these read STTS…ASNV, KSVS…SSPV, NRSA…DAPP, SAEQ…ESDA, RVCE…GAQV, PRAP…EKPS, and DYTS…DQSQ. Residues 683-693 show a composition bias toward low complexity; that stretch reads TTSTHTSAAAA. 2 stretches are compositionally biased toward low complexity: residues 911-921 and 937-953; these read SSSSSSSSSSS and SSSS…TPHT. Composition is skewed to polar residues over residues 961 to 976 and 989 to 998; these read QAPT…TQLS and SSKTSSGAQV. Positions 1025-1040 are enriched in low complexity; sequence SSSSSSEAALKLQAES. Residues 1148-1159 are compositionally biased toward acidic residues; the sequence is EQAMEQEVDSSN.

Homodimer.

It is found in the nucleus. Regulator which is able to repress transcription, possibly via its interaction with a multiprotein chromatin remodeling complex that modifies the chromatin. The protein is BRCA2-interacting transcriptional repressor EMSY of Danio rerio (Zebrafish).